We begin with the raw amino-acid sequence, 145 residues long: Snaclec salmorin subunit B (145 aa).

The N-terminal stretch at 1 to 23 is a signal peptide; it reads MGRFIFVSFGLLVVFVSLSGTGA. 3 disulfide bridges follow: Cys25–Cys36, Cys53–Cys141, and Cys118–Cys133. The C-type lectin domain maps to 32–142; that stretch reads YEGHCYKLFN…CRMEAYFVCE (111 aa). 2 residues coordinate Ca(2+): Ser64 and Glu70. Glu142 is a Ca(2+) binding site.

This sequence belongs to the snaclec family. Heterodimer of subunits A and B; disulfide-linked. In terms of tissue distribution, expressed by the venom gland.

It is found in the secreted. In terms of biological role, inhibits thrombin-induced fibrinogen clotting and factor Xa-induced prothrombin activation. Binds to thrombin and prothrombin exosites. The protein is Snaclec salmorin subunit B of Gloydius brevicauda (Korean slamosa snake).